A 21-amino-acid chain; its full sequence is Cutinase 2 (21 aa).

This sequence belongs to the cutinase family.

The protein resides in the secreted. It carries out the reaction cutin + H2O = cutin monomers.. With respect to regulation, inhibited by diisopropyl fluorophosphate (DFP). Catalyzes the hydrolysis of complex carboxylic polyesters found in the cell wall of plants. Degrades cutin, a macromolecule that forms the structure of the plant cuticle. Allows pathogenic fungi to penetrate through the cuticular barrier into the host plant during the initial stage of fungal infection. The protein is Cutinase 2 of Colletotrichum gloeosporioides (Anthracnose fungus).